Reading from the N-terminus, the 223-residue chain is PKHD-type hydroxylase CPS_3426 (223 aa).

Positions 77 to 175 (KSMMPFIISE…RKVALTWIES (99 aa)) constitute a Fe2OG dioxygenase domain. Residues His-96, Asp-98, and His-156 each contribute to the Fe cation site. Arg-166 serves as a coordination point for 2-oxoglutarate.

The cofactor is Fe(2+). L-ascorbate is required as a cofactor.

This Colwellia psychrerythraea (strain 34H / ATCC BAA-681) (Vibrio psychroerythus) protein is PKHD-type hydroxylase CPS_3426.